Consider the following 97-residue polypeptide: Putative ankyrin repeat protein RBE_0357 (97 aa).

Residues 24–54 (YGKTALHYAYTKRNIDIIKILLKCPGIKICI) form an ANK repeat.

The sequence is that of Putative ankyrin repeat protein RBE_0357 from Rickettsia bellii (strain RML369-C).